The sequence spans 338 residues: Holliday junction branch migration complex subunit RuvB (338 aa).

The interval 1–184 (MTEEERLLSA…FGIISHMEYY (184 aa)) is large ATPase domain (RuvB-L). ATP-binding positions include Leu-23, Arg-24, Gly-65, Lys-68, Thr-69, Thr-70, 131-133 (EDF), Arg-174, Tyr-184, and Arg-221. Thr-69 provides a ligand contact to Mg(2+). The segment at 185 to 255 (QEQDLKEIVL…IADKALTLLQ (71 aa)) is small ATPAse domain (RuvB-S). The segment at 258 to 338 (HQGLDYVDQK…GYDYLEGRKN (81 aa)) is head domain (RuvB-H). DNA-binding residues include Arg-313 and Arg-318.

Belongs to the RuvB family. As to quaternary structure, homohexamer. Forms an RuvA(8)-RuvB(12)-Holliday junction (HJ) complex. HJ DNA is sandwiched between 2 RuvA tetramers; dsDNA enters through RuvA and exits via RuvB. An RuvB hexamer assembles on each DNA strand where it exits the tetramer. Each RuvB hexamer is contacted by two RuvA subunits (via domain III) on 2 adjacent RuvB subunits; this complex drives branch migration. In the full resolvosome a probable DNA-RuvA(4)-RuvB(12)-RuvC(2) complex forms which resolves the HJ.

Its subcellular location is the cytoplasm. The enzyme catalyses ATP + H2O = ADP + phosphate + H(+). Functionally, the RuvA-RuvB-RuvC complex processes Holliday junction (HJ) DNA during genetic recombination and DNA repair, while the RuvA-RuvB complex plays an important role in the rescue of blocked DNA replication forks via replication fork reversal (RFR). RuvA specifically binds to HJ cruciform DNA, conferring on it an open structure. The RuvB hexamer acts as an ATP-dependent pump, pulling dsDNA into and through the RuvAB complex. RuvB forms 2 homohexamers on either side of HJ DNA bound by 1 or 2 RuvA tetramers; 4 subunits per hexamer contact DNA at a time. Coordinated motions by a converter formed by DNA-disengaged RuvB subunits stimulates ATP hydrolysis and nucleotide exchange. Immobilization of the converter enables RuvB to convert the ATP-contained energy into a lever motion, pulling 2 nucleotides of DNA out of the RuvA tetramer per ATP hydrolyzed, thus driving DNA branch migration. The RuvB motors rotate together with the DNA substrate, which together with the progressing nucleotide cycle form the mechanistic basis for DNA recombination by continuous HJ branch migration. Branch migration allows RuvC to scan DNA until it finds its consensus sequence, where it cleaves and resolves cruciform DNA. In Enterococcus faecalis (strain ATCC 700802 / V583), this protein is Holliday junction branch migration complex subunit RuvB.